The following is a 3902-amino-acid chain: Mediator of RNA polymerase II transcription subunit 12 (3902 aa).

Disordered stretches follow at residues 414 to 576, 619 to 674, 694 to 940, 977 to 1029, 1812 to 1831, 2463 to 2675, 2719 to 2771, 2876 to 3151, 3195 to 3549, and 3563 to 3902; these read ESLT…EELP, FEPF…NPKL, AFDP…LEAL, VVEK…PEPP, TSHK…TETR, TVEP…NRKQ, AGAS…SSSM, RIME…PEMQ, LQAG…SSNQ, and AGLN…QQQY. Over residues 420-430 the composition is skewed to acidic residues; the sequence is EPEEDPEEGPE. Over residues 709-721 the composition is skewed to pro residues; it reads PTPPEAPPPPPPV. Basic and acidic residues-rich tracts occupy residues 740-802, 912-928, 977-1004, and 1018-1027; these read EDGK…EHLN, KAGD…KKPD, VVEK…EKLP, and KTPEKPKTPE. Basic residues predominate over residues 1812–1824; that stretch reads TSHKTKDVKRKSA. Positions 2409–3902 are required for nuclear localization; the sequence is QTTRLDKVAK…MGQFPNQQQY (1494 aa). Over residues 2474 to 2547 the composition is skewed to basic and acidic residues; that stretch reads AAVKKPEEET…VTAKDTEKDT (74 aa). The stretch at 2480–2526 forms a coiled coil; the sequence is EEETAEKKKDEAKKADEKTTKADDEKKKDETADAKKDNEKQKEEKDK. Low complexity-rich tracts occupy residues 2548-2566, 2614-2632, and 2734-2748; these read AAPT…AAPD, SRAN…SSTT, and PHPG…QHQG. Residues 2876–2979 are compositionally biased toward basic and acidic residues; sequence RIMEEQRILR…ERLERERVAR (104 aa). Composition is skewed to low complexity over residues 2980–3001, 3010–3143, 3196–3205, and 3226–3236; these read EALA…QAQQ, QQQR…QRNP, QAGQAAGQQQ, and PQQQQQQPQQP. The segment covering 3237–3248 has biased composition (polar residues); it reads GTSQIPNTTPTR. 3 stretches are compositionally biased toward low complexity: residues 3250 to 3275, 3284 to 3295, and 3317 to 3389; these read ANPM…GQPG, GQQQQNQFQRQG, and GQQQ…FGRQ. Positions 3391 to 3409 are enriched in polar residues; it reads APNQENFQQQPGFNQNAAG. 3 stretches are compositionally biased toward low complexity: residues 3410–3446, 3454–3539, and 3570–3619; these read QNYQ…QQQN, QSQQ…QGNQ, and SSGN…RPGM. Gly residues predominate over residues 3620-3649; it reads GQQGMGQQGMGQQGGMGQSGRGQPGMGGQS. 3 stretches are compositionally biased toward low complexity: residues 3663–3700, 3710–3742, and 3760–3830; these read MGQP…QQQH, QQGR…QQAQ, and QQQQ…HRGQ. A compositionally biased stretch (gly residues) spans 3831 to 3841; it reads GQQGHGMGGAG. Residues 3842 to 3888 show a composition bias toward low complexity; that stretch reads QQHQQVPQQQQNQYFQPQQQQDQRMQQQPGGQQQQQQGQSGQQQNNQ. Over residues 3889–3902 the composition is skewed to polar residues; the sequence is HYNNMGQFPNQQQY.

The protein belongs to the Mediator complex subunit 12 family. Component of the Mediator complex.

The protein localises to the nucleus. Its function is as follows. Component of the Mediator complex, a coactivator involved in regulated gene transcription of nearly all RNA polymerase II-dependent genes. Mediator functions as a bridge to convey information from gene-specific regulatory proteins to the basal RNA polymerase II transcription machinery. Mediator is recruited to promoters by direct interactions with regulatory proteins and serves as a scaffold for the assembly of a functional preinitiation complex with RNA polymerase II and the general transcription factors. The polypeptide is Mediator of RNA polymerase II transcription subunit 12 (dpy-22) (Caenorhabditis briggsae).